An 89-amino-acid chain; its full sequence is MARKSIIARNERRKELVEKYAAKREELKKAGDYEALRKLPRDSSATRVRNRCVLTGRGRGNYEKFGLCRNMFRKLALEGKLPGVRKASW.

It belongs to the universal ribosomal protein uS14 family. In terms of assembly, part of the 30S ribosomal subunit. Contacts proteins S3 and S10.

Functionally, binds 16S rRNA, required for the assembly of 30S particles and may also be responsible for determining the conformation of the 16S rRNA at the A site. The chain is Small ribosomal subunit protein uS14 from Chlorobaculum parvum (strain DSM 263 / NCIMB 8327) (Chlorobium vibrioforme subsp. thiosulfatophilum).